A 185-amino-acid chain; its full sequence is Ribosome-recycling factor (185 aa).

Belongs to the RRF family.

The protein resides in the cytoplasm. Functionally, responsible for the release of ribosomes from messenger RNA at the termination of protein biosynthesis. May increase the efficiency of translation by recycling ribosomes from one round of translation to another. This chain is Ribosome-recycling factor, found in Salmonella paratyphi A (strain ATCC 9150 / SARB42).